The chain runs to 643 residues: Probable potassium transport system protein Kup (643 aa).

Basic and acidic residues predominate over residues Met1–Ile12. The tract at residues Met1–His20 is disordered. 12 consecutive transmembrane segments (helical) span residues Leu28–Leu48, Ala65–Leu85, Trp121–Thr141, Pro158–Phe178, Gly187–Ile207, Gly224–Leu244, Trp268–Leu288, Leu301–Ala321, Ile358–Phe378, Leu384–Tyr404, Pro415–Ala435, and Leu440–Thr460.

The protein belongs to the HAK/KUP transporter (TC 2.A.72) family.

It is found in the cell inner membrane. It catalyses the reaction K(+)(in) + H(+)(in) = K(+)(out) + H(+)(out). Its function is as follows. Transport of potassium into the cell. Likely operates as a K(+):H(+) symporter. This Chlorobium luteolum (strain DSM 273 / BCRC 81028 / 2530) (Pelodictyon luteolum) protein is Probable potassium transport system protein Kup.